Consider the following 557-residue polypeptide: Urocanate hydratase (557 aa).

Residues 53–54 (GG), Gln-131, 177–179 (GMG), 197–202 (ECQQSR), 243–244 (NA), 264–268 (QTSAH), 274–275 (YL), and 323–324 (YG) each bind NAD(+). Cys-411 is a catalytic residue. NAD(+) is bound by residues 455–456 (RE) and Gly-493.

Homodimer. NAD(+) is required as a cofactor.

The protein resides in the cytoplasm. The catalysed reaction is 4-imidazolone-5-propanoate = trans-urocanate + H2O. Its pathway is amino-acid degradation; L-histidine degradation into L-glutamate; N-formimidoyl-L-glutamate from L-histidine: step 2/3. Its function is as follows. Catalyzes the conversion of urocanate to 4-imidazolone-5-propionate. The protein is Urocanate hydratase of Pseudomonas putida (Arthrobacter siderocapsulatus).